We begin with the raw amino-acid sequence, 522 residues long: Lysine--tRNA ligase (522 aa).

Residues 44–52 carry the 'HIGH' region motif; sequence PSGLPHIGT. A 'KMSKS' region motif is present at residues 290 to 294; it reads KISKS. Residue Lys-293 participates in ATP binding.

It belongs to the class-I aminoacyl-tRNA synthetase family.

Its subcellular location is the cytoplasm. It carries out the reaction tRNA(Lys) + L-lysine + ATP = L-lysyl-tRNA(Lys) + AMP + diphosphate. The sequence is that of Lysine--tRNA ligase from Rickettsia peacockii (strain Rustic).